The following is a 190-amino-acid chain: CASP-like protein 1U3 (190 aa).

Residues 1–24 (MNGATVQPSYKEAGPVRYHPMHDC) are Cytoplasmic-facing. A helical transmembrane segment spans residues 25–45 (LSLILRLLTLGATIAAIVAML). Over 46–70 (KSTQTVPTLLGPHTARWKDFPAFEW) the chain is Extracellular. A helical transmembrane segment spans residues 71–91 (FVIGNSIVLVYAALGTLAACL). Topologically, residues 92–113 (SLFTRRGPLSYTKTAWLTFLCD) are cytoplasmic. Residues 114–134 (FICSCALISAGSTALGVAWIG) traverse the membrane as a helical segment. Topologically, residues 135-158 (KHGQHSAFWNAVCPTVDRFCDYVQ) are extracellular. A helical membrane pass occupies residues 159–179 (GALIATLCGFIFQALSTVIAA). Residues 180–190 (SALHNLATHRH) lie on the Cytoplasmic side of the membrane.

It belongs to the Casparian strip membrane proteins (CASP) family. As to quaternary structure, homodimer and heterodimers.

The protein resides in the cell membrane. The sequence is that of CASP-like protein 1U3 from Physcomitrium patens (Spreading-leaved earth moss).